Consider the following 298-residue polypeptide: tRNA dimethylallyltransferase (298 aa).

An ATP-binding site is contributed by 10 to 17 (GATATGKS). 12–17 (TATGKS) contacts substrate. Positions 35–38 (DSRQ) are interaction with substrate tRNA.

Belongs to the IPP transferase family. Monomer. It depends on Mg(2+) as a cofactor.

It catalyses the reaction adenosine(37) in tRNA + dimethylallyl diphosphate = N(6)-dimethylallyladenosine(37) in tRNA + diphosphate. Functionally, catalyzes the transfer of a dimethylallyl group onto the adenine at position 37 in tRNAs that read codons beginning with uridine, leading to the formation of N6-(dimethylallyl)adenosine (i(6)A). This chain is tRNA dimethylallyltransferase, found in Picosynechococcus sp. (strain ATCC 27264 / PCC 7002 / PR-6) (Agmenellum quadruplicatum).